The sequence spans 484 residues: Aspartyl/glutamyl-tRNA(Asn/Gln) amidotransferase subunit B (484 aa).

It belongs to the GatB/GatE family. GatB subfamily. Heterotrimer of A, B and C subunits.

The enzyme catalyses L-glutamyl-tRNA(Gln) + L-glutamine + ATP + H2O = L-glutaminyl-tRNA(Gln) + L-glutamate + ADP + phosphate + H(+). The catalysed reaction is L-aspartyl-tRNA(Asn) + L-glutamine + ATP + H2O = L-asparaginyl-tRNA(Asn) + L-glutamate + ADP + phosphate + 2 H(+). In terms of biological role, allows the formation of correctly charged Asn-tRNA(Asn) or Gln-tRNA(Gln) through the transamidation of misacylated Asp-tRNA(Asn) or Glu-tRNA(Gln) in organisms which lack either or both of asparaginyl-tRNA or glutaminyl-tRNA synthetases. The reaction takes place in the presence of glutamine and ATP through an activated phospho-Asp-tRNA(Asn) or phospho-Glu-tRNA(Gln). The polypeptide is Aspartyl/glutamyl-tRNA(Asn/Gln) amidotransferase subunit B (Bordetella parapertussis (strain 12822 / ATCC BAA-587 / NCTC 13253)).